Reading from the N-terminus, the 320-residue chain is o-succinylbenzoate synthase (320 aa).

The active-site Proton donor is K133. Residues D161, E190, and D213 each coordinate Mg(2+). K235 serves as the catalytic Proton acceptor.

The protein belongs to the mandelate racemase/muconate lactonizing enzyme family. MenC type 1 subfamily. The cofactor is a divalent metal cation.

The enzyme catalyses (1R,6R)-6-hydroxy-2-succinyl-cyclohexa-2,4-diene-1-carboxylate = 2-succinylbenzoate + H2O. It functions in the pathway quinol/quinone metabolism; 1,4-dihydroxy-2-naphthoate biosynthesis; 1,4-dihydroxy-2-naphthoate from chorismate: step 4/7. The protein operates within quinol/quinone metabolism; menaquinone biosynthesis. In terms of biological role, converts 2-succinyl-6-hydroxy-2,4-cyclohexadiene-1-carboxylate (SHCHC) to 2-succinylbenzoate (OSB). This Salmonella agona (strain SL483) protein is o-succinylbenzoate synthase.